The chain runs to 108 residues: Nucleoid-associated protein PSPTO_3645 (108 aa).

Positions 85–96 (QASQDKTASMTA) are enriched in polar residues. Positions 85–108 (QASQDKTASMTAGMQLPPGMKLPF) are disordered.

Belongs to the YbaB/EbfC family. In terms of assembly, homodimer.

Its subcellular location is the cytoplasm. The protein localises to the nucleoid. Binds to DNA and alters its conformation. May be involved in regulation of gene expression, nucleoid organization and DNA protection. The polypeptide is Nucleoid-associated protein PSPTO_3645 (Pseudomonas syringae pv. tomato (strain ATCC BAA-871 / DC3000)).